The chain runs to 351 residues: uncharacterized protein (351 aa).

Mn(2+) is bound by residues D215, D226, H290, E319, and E333.

It belongs to the peptidase M24B family. Mn(2+) serves as cofactor.

This is an uncharacterized protein from Staphylococcus aureus (strain MRSA252).